The sequence spans 1377 residues: Zinc finger MYM-type protein 2 (1377 aa).

Residues Lys-48, Lys-88, Lys-98, and Lys-104 each participate in a glycyl lysine isopeptide (Lys-Gly) (interchain with G-Cter in SUMO2) cross-link. Polar residues-rich tracts occupy residues 85 to 115 (TSSKNEELQGNDSKITPSSKELASQKGSVSE) and 127 to 138 (TNQGQEKNSSNF). The interval 85–177 (TSSKNEELQG…GMGNSGITTE (93 aa)) is disordered. Residues 139 to 152 (IERRPPETKNRTND) show a composition bias toward basic and acidic residues. Lys-147 is covalently cross-linked (Glycyl lysine isopeptide (Lys-Gly) (interchain with G-Cter in SUMO2)). A compositionally biased stretch (polar residues) spans 153-164 (VDFSTSSFSRSK). At Ser-159 the chain carries Phosphoserine. Glycyl lysine isopeptide (Lys-Gly) (interchain with G-Cter in SUMO2) cross-links involve residues Lys-253 and Lys-297. Residues 273-305 (NGESATHHNPDSWISQSASFPRNQKQPGVDSLS) form a disordered region. The span at 284 to 298 (SWISQSASFPRNQKQ) shows a compositional bias: polar residues. A Phosphoserine modification is found at Ser-305. Residues Lys-312, Lys-325, Lys-348, and Lys-366 each participate in a glycyl lysine isopeptide (Lys-Gly) (interchain with G-Cter in SUMO2) cross-link. The MYM-type 1 zinc-finger motif lies at 327-363 (VKVTCANCKKPLQKGQTAYQRKGSAHLFCSTTCLSSF). The MYM-type 2 zinc finger occupies 369-409 (PKKLCVMCKKDITTMKGTIVAQVDSSESFQEFCSTSCLSLY). Glycyl lysine isopeptide (Lys-Gly) (interchain with G-Cter in SUMO2) cross-links involve residues Lys-417, Lys-441, Lys-491, Lys-503, Lys-513, Lys-529, and Lys-532. 2 consecutive MYM-type zinc fingers follow at residues 421–456 (NKSRCTICGKLTEIRHEVSFKNMTHKLCSDHCFNRY) and 463–502 (IMNCCEQCGEYLPSKGAGNNVLVIDGQQKRFCCQSCVSEY). The segment at 533-570 (LTTCTGCRTQCRFFDMTQCIGPNGYMEPYCSTACMNSH) adopts an MYM-type 5 zinc-finger fold. Glycyl lysine isopeptide (Lys-Gly) (interchain with G-Cter in SUMO2) cross-links involve residues Lys-576, Lys-603, Lys-649, Lys-658, Lys-688, Lys-700, and Lys-709. The segment at 636 to 671 (QLKCNYCKNSFCSKPEILEWENKVHQFCSKTCSDDY) adopts an MYM-type 6 zinc-finger fold. 2 MYM-type zinc fingers span residues 723-758 (RCVTCNYCSQLCKKGATKELDGVVRDFCSEDCCKKF) and 764-799 (KAARCDCCKSQGTLKERVQWRGEMKHFCDQHCLLRF). Residues Lys-764, Lys-788, Lys-812, and Lys-829 each participate in a glycyl lysine isopeptide (Lys-Gly) (interchain with G-Cter in SUMO2) cross-link. A phosphoserine mark is found at Ser-838 and Ser-958. 2 disordered regions span residues 983–1002 (LLKNSDPETQSSMPDVPYEP) and 1028–1064 (VFGEEYEEQPRPRSKKKGAKRKAVSGYQSHDDSSDNS). The segment covering 1039–1050 (PRSKKKGAKRKA) has biased composition (basic residues). Phosphoserine is present on Ser-1064. Thr-1376 carries the phosphothreonine modification.

Can form homodimers. May be a component of a BHC histone deacetylase complex that contains HDAC1, HDAC2, HMG20B/BRAF35, KDM1A, RCOR1/CoREST, PHF21A/BHC80, ZMYM2, ZNF217, ZMYM3, GSE1 and GTF2I. Interacts with FOXP1 and FOXP2.

It is found in the nucleus. Functionally, involved in the negative regulation of transcription. The polypeptide is Zinc finger MYM-type protein 2 (ZMYM2) (Homo sapiens (Human)).